A 707-amino-acid polypeptide reads, in one-letter code: Choline transporter-like protein 4 (707 aa).

Over 1 to 32 (MGEKQDPDKAYGKPAKYDPSFRGPIRNRSCTD) the chain is Cytoplasmic. Residues 33 to 53 (IICCVLFFVFILGYIAVGLVA) traverse the membrane as a helical segment. The Extracellular portion of the chain corresponds to 54-226 (WVYGDPQQVL…KIFEDFAQSW (173 aa)). N-linked (GlcNAc...) asparagine glycosylation is found at asparagine 67, asparagine 142, asparagine 184, and asparagine 195. The helical transmembrane segment at 227 to 247 (YWILAALGVALVLSLLFVLLL) threads the bilayer. Over 248–249 (RL) the chain is Cytoplasmic. Residues 250 to 270 (VAGPLVFVLIIGVLGVLAYGI) form a helical membrane-spanning segment. Residues 271–306 (YHCWNEYRLLRDKGASISQLGFTTNLSAYSSVQETW) lie on the Extracellular side of the membrane. Residue asparagine 295 is glycosylated (N-linked (GlcNAc...) asparagine). The helical transmembrane segment at 307–327 (LAALILLAVLEGILLLMLIFL) threads the bilayer. Topologically, residues 328–355 (RQRIRIAIALLEEASRAVGQMMSTLFYP) are cytoplasmic. A helical transmembrane segment spans residues 356 to 376 (LVTFVLLLVCIAYWAMTALYL). Topologically, residues 377-452 (ATSGQPQYVL…GVLGLFWTIN (76 aa)) are extracellular. Residues asparagine 390, asparagine 402, and asparagine 413 are each glycosylated (N-linked (GlcNAc...) asparagine). Residues 453–473 (WVLALGQCVLAGAFASFYWAF) traverse the membrane as a helical segment. At 474–498 (HKPRDIPTFPLSSAFIRTLRYHTGS) the chain is on the cytoplasmic side. Residues 499-519 (LAFGALILTLVQIARAILEYI) traverse the membrane as a helical segment. At 520-557 (DHKLRGAQNPVARCIMCCFKCCLWCLEKFIKFLNRNAY) the chain is on the extracellular side. The chain crosses the membrane as a helical span at residues 558-578 (IMIAIYGKNFCVSAKNAFMLL). The Cytoplasmic segment spans residues 579–594 (MRNIVRVVVLDKVTDL). A helical transmembrane segment spans residues 595-615 (LLFFGKLLVVGGVGVLSFFFF). At 616 to 635 (TGRIQGLGKDFESPQLNYYW) the chain is on the extracellular side. Residues 636–656 (LPIMTSIMGAYVIASGFFSVF) traverse the membrane as a helical segment. The Cytoplasmic segment spans residues 657–707 (GMCVDTLFLCFLEDLERNDGSLDRPYYMSKALLKILGKKNEVPSGDKKRKK).

This sequence belongs to the CTL (choline transporter-like) family. In terms of processing, N-glycosylated; N-glycosylation of Asn-677 and Asn-390 is required for a proper thiamine pyrophosphate uptake.

The protein localises to the membrane. It is found in the apical cell membrane. It catalyses the reaction choline(out) + n H(+)(in) = choline(in) + n H(+)(out). The enzyme catalyses thiamine diphosphate(out) = thiamine diphosphate(in). Functionally, choline transporter that plays a role in the choline-acetylcholine system and is required to the efferent innervation of hair cells in the olivocochlear bundle for the maintenance of physiological function of outer hair cells and the protection of hair cells from acoustic injury. Also described as a thiamine pyrophosphate transporter in colon, may mediate the absorption of microbiota-generated thiamine pyrophosphate and contribute to host thiamine (vitamin B1) homeostasis. The chain is Choline transporter-like protein 4 from Sus scrofa (Pig).